A 200-amino-acid chain; its full sequence is NADH-quinone oxidoreductase subunit C (200 aa).

Belongs to the complex I 30 kDa subunit family. NDH-1 is composed of 14 different subunits. Subunits NuoB, C, D, E, F, and G constitute the peripheral sector of the complex.

Its subcellular location is the cell inner membrane. It carries out the reaction a quinone + NADH + 5 H(+)(in) = a quinol + NAD(+) + 4 H(+)(out). Functionally, NDH-1 shuttles electrons from NADH, via FMN and iron-sulfur (Fe-S) centers, to quinones in the respiratory chain. The immediate electron acceptor for the enzyme in this species is believed to be ubiquinone. Couples the redox reaction to proton translocation (for every two electrons transferred, four hydrogen ions are translocated across the cytoplasmic membrane), and thus conserves the redox energy in a proton gradient. The protein is NADH-quinone oxidoreductase subunit C of Rhizobium johnstonii (strain DSM 114642 / LMG 32736 / 3841) (Rhizobium leguminosarum bv. viciae).